A 251-amino-acid chain; its full sequence is tRNA-cytidine(32) 2-sulfurtransferase 2 (251 aa).

The short motif at 33-38 (SGGKDS) is the PP-loop motif element. Positions 108, 111, and 199 each coordinate [4Fe-4S] cluster.

Belongs to the TtcA family. In terms of assembly, homodimer. Mg(2+) is required as a cofactor. It depends on [4Fe-4S] cluster as a cofactor.

The protein localises to the cytoplasm. It carries out the reaction cytidine(32) in tRNA + S-sulfanyl-L-cysteinyl-[cysteine desulfurase] + AH2 + ATP = 2-thiocytidine(32) in tRNA + L-cysteinyl-[cysteine desulfurase] + A + AMP + diphosphate + H(+). It functions in the pathway tRNA modification. Catalyzes the ATP-dependent 2-thiolation of cytidine in position 32 of tRNA, to form 2-thiocytidine (s(2)C32). The sulfur atoms are provided by the cysteine/cysteine desulfurase (IscS) system. This chain is tRNA-cytidine(32) 2-sulfurtransferase 2, found in Francisella tularensis subsp. tularensis (strain FSC 198).